The chain runs to 221 residues: Catechol O-methyltransferase (221 aa).

S-adenosyl-L-methionine is bound by residues Val-41, Gly-65, Leu-67, Ser-71, Glu-89, His-94, Ala-118, and Asp-139. Mg(2+)-binding residues include Asp-139, Asp-165, and Asn-166.

This sequence belongs to the class I-like SAM-binding methyltransferase superfamily. Cation-dependent O-methyltransferase family. Homodimer. It depends on Mg(2+) as a cofactor.

The enzyme catalyses a catechol + S-adenosyl-L-methionine = a guaiacol + S-adenosyl-L-homocysteine + H(+). The metal ion affects the meta and para-regiospecificity of the enzyme as well as the enzyme activity and thermal stability. Catechol O-methyltransferase that can use various catechol-like compounds. Can produce vanillic acid (meta-form) and iso-vanillic acid (para-form) from protocatechuic acid (PCA). Does not have a regiospecificity, and produces the meta- and para-forms of the products in equal proportion. In Niastella koreensis (strain DSM 17620 / KACC 11465 / NBRC 106392 / GR20-10), this protein is Catechol O-methyltransferase.